We begin with the raw amino-acid sequence, 427 residues long: Hydroxylamine reductase (427 aa).

[4Fe-4S] cluster contacts are provided by Cys3, Cys6, Cys15, and Cys21. The hybrid [4Fe-2O-2S] cluster site is built by His129, Glu153, Cys197, Cys283, Cys311, Cys336, Glu370, and Lys372. At Cys283 the chain carries Cysteine persulfide.

It belongs to the HCP family. The cofactor is [4Fe-4S] cluster. It depends on hybrid [4Fe-2O-2S] cluster as a cofactor.

The protein resides in the cytoplasm. The catalysed reaction is A + NH4(+) + H2O = hydroxylamine + AH2 + H(+). Its function is as follows. Catalyzes the reduction of hydroxylamine to form NH(3) and H(2)O. This Methanothermobacter thermautotrophicus (strain ATCC 29096 / DSM 1053 / JCM 10044 / NBRC 100330 / Delta H) (Methanobacterium thermoautotrophicum) protein is Hydroxylamine reductase.